The sequence spans 233 residues: Tropomyosin (233 aa).

The stretch at 6 to 222 forms a coiled coil; that stretch reads FDTVNEKYQE…KERYKAISDE (217 aa). Residues 48 to 88 are disordered; it reads MERSEERLQTATEKLEEASKAADESERNRKVLENLNNASEE. Basic and acidic residues predominate over residues 51–79; that stretch reads SEERLQTATEKLEEASKAADESERNRKVL.

Belongs to the tropomyosin family. Homodimer.

Its function is as follows. Tropomyosin, in association with the troponin complex, plays a central role in the calcium dependent regulation of muscle contraction. This is Tropomyosin from Magallana gigas (Pacific oyster).